Consider the following 728-residue polypeptide: Catalase-peroxidase (728 aa).

The segment at residues tryptophan 97–tyrosine 225 is a cross-link (tryptophyl-tyrosyl-methioninium (Trp-Tyr) (with M-251)). The active-site Proton acceptor is the histidine 98. Positions tyrosine 225 to methionine 251 form a cross-link, tryptophyl-tyrosyl-methioninium (Tyr-Met) (with W-97). Histidine 266 is a heme b binding site.

The protein belongs to the peroxidase family. Peroxidase/catalase subfamily. In terms of assembly, homodimer or homotetramer. Heme b is required as a cofactor. Formation of the three residue Trp-Tyr-Met cross-link is important for the catalase, but not the peroxidase activity of the enzyme.

The catalysed reaction is H2O2 + AH2 = A + 2 H2O. It carries out the reaction 2 H2O2 = O2 + 2 H2O. Functionally, bifunctional enzyme with both catalase and broad-spectrum peroxidase activity. This chain is Catalase-peroxidase, found in Shewanella putrefaciens (strain CN-32 / ATCC BAA-453).